Here is a 376-residue protein sequence, read N- to C-terminus: Succinyl-diaminopimelate desuccinylase (376 aa).

His-66 is a binding site for Zn(2+). Asp-68 is a catalytic residue. A Zn(2+)-binding site is contributed by Asp-99. The Proton acceptor role is filled by Glu-133. Residues Glu-134, Glu-162, and His-348 each contribute to the Zn(2+) site.

The protein belongs to the peptidase M20A family. DapE subfamily. In terms of assembly, homodimer. It depends on Zn(2+) as a cofactor. Co(2+) serves as cofactor.

The catalysed reaction is N-succinyl-(2S,6S)-2,6-diaminopimelate + H2O = (2S,6S)-2,6-diaminopimelate + succinate. Its pathway is amino-acid biosynthesis; L-lysine biosynthesis via DAP pathway; LL-2,6-diaminopimelate from (S)-tetrahydrodipicolinate (succinylase route): step 3/3. Catalyzes the hydrolysis of N-succinyl-L,L-diaminopimelic acid (SDAP), forming succinate and LL-2,6-diaminopimelate (DAP), an intermediate involved in the bacterial biosynthesis of lysine and meso-diaminopimelic acid, an essential component of bacterial cell walls. The chain is Succinyl-diaminopimelate desuccinylase from Nitrosococcus oceani (strain ATCC 19707 / BCRC 17464 / JCM 30415 / NCIMB 11848 / C-107).